The sequence spans 306 residues: Curved DNA-binding protein (306 aa).

The J domain occupies 5–69; that stretch reads DYYAIMGVKP…QRRAEYDQMW (65 aa).

It localises to the cytoplasm. It is found in the nucleoid. Functionally, DNA-binding protein that preferentially recognizes a curved DNA sequence. It is probably a functional analog of DnaJ; displays overlapping activities with DnaJ, but functions under different conditions, probably acting as a molecular chaperone in an adaptive response to environmental stresses other than heat shock. Lacks autonomous chaperone activity; binds native substrates and targets them for recognition by DnaK. Its activity is inhibited by the binding of CbpM. The sequence is that of Curved DNA-binding protein from Escherichia coli O157:H7.